We begin with the raw amino-acid sequence, 340 residues long: Nicotianamine synthase 9 (340 aa).

The protein belongs to the nicotianamine synthase (NAS)-like family. As to quaternary structure, homotrimer.

It carries out the reaction 3 S-adenosyl-L-methionine = nicotianamine + 3 S-methyl-5'-thioadenosine + 3 H(+). In terms of biological role, synthesizes nicotianamine, a polyamine that is the first intermediate in the synthesis of the phytosiderophores of the mugineic acid type found in gramineae which serves as a sensor for the physiological iron status within the plant, and/or might be involved in the transport of iron. This is Nicotianamine synthase 9 (NAS9) from Hordeum vulgare (Barley).